The chain runs to 433 residues: Probable oxaloacetate decarboxylase beta chain (433 aa).

A run of 9 helical transmembrane segments spans residues 13–35 (LFHL…YLAI), 125–147 (YLFY…GVGA), 162–184 (LLGA…LSSL), 189–211 (FSVA…AIYV), 215–237 (LAPE…VPMI), 267–289 (IGFP…PLLG), 309–328 (TAQN…SVGS), 340–362 (TIGI…VLMA), and 404–426 (FLLM…AAGV).

This sequence belongs to the GcdB/MmdB/OadB family. As to quaternary structure, heterotrimer of an alpha, a beta and a gamma subunit. Na(+) is required as a cofactor.

The protein resides in the cell membrane. The catalysed reaction is oxaloacetate + 2 Na(+)(in) + H(+) = pyruvate + 2 Na(+)(out) + CO2. Its function is as follows. Catalyzes the decarboxylation of oxaloacetate coupled to Na(+) translocation. The chain is Probable oxaloacetate decarboxylase beta chain (oadB) from Vibrio cholerae serotype O1 (strain ATCC 39315 / El Tor Inaba N16961).